Consider the following 140-residue polypeptide: Nucleoside diphosphate kinase (140 aa).

Lys-11, Phe-59, Arg-87, Thr-93, Arg-104, and Asn-114 together coordinate ATP. The Pros-phosphohistidine intermediate role is filled by His-117.

The protein belongs to the NDK family. As to quaternary structure, homotetramer. It depends on Mg(2+) as a cofactor.

It is found in the cytoplasm. The enzyme catalyses a 2'-deoxyribonucleoside 5'-diphosphate + ATP = a 2'-deoxyribonucleoside 5'-triphosphate + ADP. It carries out the reaction a ribonucleoside 5'-diphosphate + ATP = a ribonucleoside 5'-triphosphate + ADP. Its function is as follows. Major role in the synthesis of nucleoside triphosphates other than ATP. The ATP gamma phosphate is transferred to the NDP beta phosphate via a ping-pong mechanism, using a phosphorylated active-site intermediate. The polypeptide is Nucleoside diphosphate kinase (Bradyrhizobium sp. (strain BTAi1 / ATCC BAA-1182)).